Here is a 510-residue protein sequence, read N- to C-terminus: Glycosyl hydrolase YngK (510 aa).

The first 30 residues, Met-1 to Ala-30, serve as a signal peptide directing secretion.

The protein belongs to the glycosyl hydrolase-like 10 (GHL10) family.

In Bacillus subtilis (strain 168), this protein is Glycosyl hydrolase YngK (yngK).